Here is a 432-residue protein sequence, read N- to C-terminus: Enolase (432 aa).

Residue Q167 coordinates (2R)-2-phosphoglycerate. E209 acts as the Proton donor in catalysis. Residues D246, E291, and D318 each coordinate Mg(2+). 4 residues coordinate (2R)-2-phosphoglycerate: K343, R372, S373, and K394. K343 acts as the Proton acceptor in catalysis.

It belongs to the enolase family. In terms of assembly, component of the RNA degradosome, a multiprotein complex involved in RNA processing and mRNA degradation. The cofactor is Mg(2+).

The protein resides in the cytoplasm. The protein localises to the secreted. It localises to the cell surface. It catalyses the reaction (2R)-2-phosphoglycerate = phosphoenolpyruvate + H2O. It participates in carbohydrate degradation; glycolysis; pyruvate from D-glyceraldehyde 3-phosphate: step 4/5. In terms of biological role, catalyzes the reversible conversion of 2-phosphoglycerate (2-PG) into phosphoenolpyruvate (PEP). It is essential for the degradation of carbohydrates via glycolysis. The polypeptide is Enolase (Aliivibrio fischeri (strain ATCC 700601 / ES114) (Vibrio fischeri)).